Here is a 428-residue protein sequence, read N- to C-terminus: Adenylosuccinate synthetase (428 aa).

GTP-binding positions include 12–18 (GDEGKGK) and 40–42 (GHT). Catalysis depends on Asp-13, which acts as the Proton acceptor. Mg(2+)-binding residues include Asp-13 and Gly-40. IMP contacts are provided by residues 13 to 16 (DEGK), 38 to 41 (NAGH), Thr-128, Arg-142, Gln-223, Thr-238, and Arg-302. Catalysis depends on His-41, which acts as the Proton donor. Position 298-304 (298-304 (TTTGRPR)) interacts with substrate. GTP is bound by residues Arg-304, 330–332 (SID), and 412–414 (SVG).

Belongs to the adenylosuccinate synthetase family. As to quaternary structure, homodimer. It depends on Mg(2+) as a cofactor.

It localises to the cytoplasm. The catalysed reaction is IMP + L-aspartate + GTP = N(6)-(1,2-dicarboxyethyl)-AMP + GDP + phosphate + 2 H(+). It functions in the pathway purine metabolism; AMP biosynthesis via de novo pathway; AMP from IMP: step 1/2. Plays an important role in the de novo pathway of purine nucleotide biosynthesis. Catalyzes the first committed step in the biosynthesis of AMP from IMP. This Geobacillus kaustophilus (strain HTA426) protein is Adenylosuccinate synthetase.